Here is a 408-residue protein sequence, read N- to C-terminus: L-lactate oxidase (408 aa).

The 357-residue stretch at 14-370 folds into the FMN hydroxy acid dehydrogenase domain; it reads NEAIKMVNVD…KHADIRQINY (357 aa). Y40 provides a ligand contact to pyruvate. Residues 93 to 95, S122, and Q144 contribute to the FMN site; that span reads PIA. Pyruvate is bound at residue Y146. Position 172 (T172) interacts with FMN. R181 serves as a coordination point for pyruvate. Positions 241 and 263 each coordinate FMN. Positions 265 and 268 each coordinate pyruvate. H265 acts as the Proton acceptor in catalysis. FMN contacts are provided by residues 296-300 and R320; that span reads DSGVR.

The protein belongs to the FMN-dependent alpha-hydroxy acid dehydrogenase family. As to quaternary structure, homotetramer. FMN serves as cofactor.

The catalysed reaction is a (2S)-2-hydroxycarboxylate + O2 = a 2-oxocarboxylate + H2O2. The enzyme catalyses (S)-lactate + O2 = pyruvate + H2O2. It catalyses the reaction 2-hydroxyoctanoate + O2 = 2-oxooctanoate + H2O2. It carries out the reaction glycolate + O2 = glyoxylate + H2O2. The catalysed reaction is mandelate + O2 = phenylglyoxylate + H2O2. The enzyme catalyses 2-hydroxyoctadecanoate + O2 = 2-oxooctadecanoate + H2O2. Oxidase that catalyzes the oxidation of a broad range of 2-hydroxyacids in vitro, such as (S)-lactate, 2-hydroxyoctanoate, and to a lesser extent glycolate, mandelate and 2-hydroxyoctadecanoate, to the corresponding 2-oxoacids, with a reduction of O2 to H2O2. May be involved in the utilization of L-lactate as an energy source for growth. This Lactobacillus jensenii protein is L-lactate oxidase.